The primary structure comprises 193 residues: Probable thymidylate kinase (193 aa).

7 to 14 is an ATP binding site; it reads GIDGAGKT.

This sequence belongs to the thymidylate kinase family.

It catalyses the reaction dTMP + ATP = dTDP + ADP. The sequence is that of Probable thymidylate kinase (tmk) from Thermoplasma acidophilum (strain ATCC 25905 / DSM 1728 / JCM 9062 / NBRC 15155 / AMRC-C165).